The following is a 213-amino-acid chain: NADH-quinone oxidoreductase subunit C (213 aa).

It belongs to the complex I 30 kDa subunit family. As to quaternary structure, NDH-1 is composed of 14 different subunits. Subunits NuoB, C, D, E, F, and G constitute the peripheral sector of the complex.

It is found in the cell inner membrane. The enzyme catalyses a quinone + NADH + 5 H(+)(in) = a quinol + NAD(+) + 4 H(+)(out). Functionally, NDH-1 shuttles electrons from NADH, via FMN and iron-sulfur (Fe-S) centers, to quinones in the respiratory chain. The immediate electron acceptor for the enzyme in this species is believed to be ubiquinone. Couples the redox reaction to proton translocation (for every two electrons transferred, four hydrogen ions are translocated across the cytoplasmic membrane), and thus conserves the redox energy in a proton gradient. This Rhodospirillum rubrum (strain ATCC 11170 / ATH 1.1.1 / DSM 467 / LMG 4362 / NCIMB 8255 / S1) protein is NADH-quinone oxidoreductase subunit C.